A 173-amino-acid polypeptide reads, in one-letter code: Ribulose bisphosphate carboxylase small subunit, chloroplastic 1 (173 aa).

Residues 1–52 (MMVSTAAVARVRPAQTNMVGAFNGCRSSVAFPATRKANNDLSTLPSSGGRVS) constitute a chloroplast transit peptide.

This sequence belongs to the RuBisCO small chain family. In terms of assembly, heterohexadecamer of 8 large and 8 small subunits.

The protein localises to the plastid. Its subcellular location is the chloroplast. In terms of biological role, ruBisCO catalyzes two reactions: the carboxylation of D-ribulose 1,5-bisphosphate, the primary event in carbon dioxide fixation, as well as the oxidative fragmentation of the pentose substrate. Both reactions occur simultaneously and in competition at the same active site. Although the small subunit is not catalytic it is essential for maximal activity. The sequence is that of Ribulose bisphosphate carboxylase small subunit, chloroplastic 1 from Lemna gibba (Swollen duckweed).